The primary structure comprises 253 residues: Imidazole glycerol phosphate synthase subunit HisF (253 aa).

Active-site residues include Asp-11 and Asp-130.

Belongs to the HisA/HisF family. In terms of assembly, heterodimer of HisH and HisF.

The protein localises to the cytoplasm. It catalyses the reaction 5-[(5-phospho-1-deoxy-D-ribulos-1-ylimino)methylamino]-1-(5-phospho-beta-D-ribosyl)imidazole-4-carboxamide + L-glutamine = D-erythro-1-(imidazol-4-yl)glycerol 3-phosphate + 5-amino-1-(5-phospho-beta-D-ribosyl)imidazole-4-carboxamide + L-glutamate + H(+). It participates in amino-acid biosynthesis; L-histidine biosynthesis; L-histidine from 5-phospho-alpha-D-ribose 1-diphosphate: step 5/9. Its function is as follows. IGPS catalyzes the conversion of PRFAR and glutamine to IGP, AICAR and glutamate. The HisF subunit catalyzes the cyclization activity that produces IGP and AICAR from PRFAR using the ammonia provided by the HisH subunit. In Cereibacter sphaeroides (strain ATCC 17029 / ATH 2.4.9) (Rhodobacter sphaeroides), this protein is Imidazole glycerol phosphate synthase subunit HisF.